Reading from the N-terminus, the 436-residue chain is Citrate synthase (436 aa).

Catalysis depends on residues H311 and D370.

Belongs to the citrate synthase family.

The catalysed reaction is oxaloacetate + acetyl-CoA + H2O = citrate + CoA + H(+). It participates in carbohydrate metabolism; tricarboxylic acid cycle; isocitrate from oxaloacetate: step 1/2. The polypeptide is Citrate synthase (gltA) (Rickettsia typhi (strain ATCC VR-144 / Wilmington)).